A 102-amino-acid polypeptide reads, in one-letter code: MFLTALLWRGRIPGRQWIGKHRRPRFVSLRAKQNMIRRLEIEAENHYWLSMPYMTREQERGHAAVRRREAFEAIKAAATSKFPPHRFIADQLDHLNVTKKWS.

It belongs to the mitochondrion-specific ribosomal protein mL63 family. Component of the mitochondrial large ribosomal subunit (mt-LSU). Mature mammalian 55S mitochondrial ribosomes consist of a small (28S) and a large (39S) subunit. The 28S small subunit contains a 12S ribosomal RNA (12S mt-rRNA) and 30 different proteins. The 39S large subunit contains a 16S rRNA (16S mt-rRNA), a copy of mitochondrial valine transfer RNA (mt-tRNA(Val)), which plays an integral structural role, and 52 different proteins.

It is found in the mitochondrion. The sequence is that of Large ribosomal subunit protein mL63 (MRPL57) from Homo sapiens (Human).